The primary structure comprises 209 residues: Uracil phosphoribosyltransferase (209 aa).

5-phospho-alpha-D-ribose 1-diphosphate is bound by residues Arg-77, Arg-102, and 129–137; that span reads DPMLATGVS. Uracil is bound by residues Ile-192 and 197–199; that span reads GDA. Asp-198 contributes to the 5-phospho-alpha-D-ribose 1-diphosphate binding site.

Belongs to the UPRTase family. The cofactor is Mg(2+).

The enzyme catalyses UMP + diphosphate = 5-phospho-alpha-D-ribose 1-diphosphate + uracil. Its pathway is pyrimidine metabolism; UMP biosynthesis via salvage pathway; UMP from uracil: step 1/1. With respect to regulation, allosterically activated by GTP. In terms of biological role, catalyzes the conversion of uracil and 5-phospho-alpha-D-ribose 1-diphosphate (PRPP) to UMP and diphosphate. This chain is Uracil phosphoribosyltransferase, found in Metamycoplasma arthritidis (strain 158L3-1) (Mycoplasma arthritidis).